Here is a 202-residue protein sequence, read N- to C-terminus: Recombination protein RecR (202 aa).

The C4-type zinc finger occupies C61–C76. The region spanning S84–P179 is the Toprim domain.

It belongs to the RecR family.

May play a role in DNA repair. It seems to be involved in an RecBC-independent recombinational process of DNA repair. It may act with RecF and RecO. The protein is Recombination protein RecR of Bordetella avium (strain 197N).